A 516-amino-acid polypeptide reads, in one-letter code: Polyprenol-phosphate-mannose--protein mannosyltransferase (516 aa).

Residues 1–11 (MTALDTDTPTA) are compositionally biased toward polar residues. Residues 1–23 (MTALDTDTPTAGRSAPLISPGPV) form a disordered region. 9 helical membrane passes run 113–133 (YNGL…VMLV), 143–163 (STLV…SFVS), 166–186 (TALL…CLMV), 234–254 (WSGL…DAIA), 275–295 (AAYV…APWF), 384–404 (VMLV…GWAL), 413–433 (WRYG…FADI), 437–457 (MYFF…ALIL), and 473–493 (LGLL…AWMY).

Belongs to the glycosyltransferase 39 family.

It is found in the cell membrane. It functions in the pathway protein modification; protein glycosylation. Its function is as follows. Protein O-mannosyltransferase that catalyzes the transfer of a single mannose residue from a polyprenol phospho-mannosyl lipidic donor to the hydroxyl group of selected serine and threonine residues in acceptor proteins. Involved in DNA conjugation, in at least the recipient strain. The chain is Polyprenol-phosphate-mannose--protein mannosyltransferase (pmt) from Mycolicibacterium smegmatis (strain MKD8) (Mycobacterium smegmatis).